A 420-amino-acid chain; its full sequence is Putative sporulation-specific glycosylase YdhD (420 aa).

LysM domains lie at 2–45 and 48–92; these read FIHI…ALLI and YVYT…KITI. One can recognise a GH18 domain in the interval 100-420; the sequence is AGTLSFYVLR…LRKFFTIRKV (321 aa). Residue Glu212 is the Proton donor of the active site.

It belongs to the glycosyl hydrolase 18 family. Chitinase class II subfamily.

It localises to the spore wall. In Bacillus subtilis (strain 168), this protein is Putative sporulation-specific glycosylase YdhD (ydhD).